The primary structure comprises 929 residues: SCY1-like protein 2 (929 aa).

The Protein kinase domain occupies 32-327; it reads FDVGRHIASG…ADQMTKIPFF (296 aa). Residues 443–479 form an HEAT repeat; that stretch reads DEIKNSVLPMVYRALEAPSIQIQELCLNIIPTFANLI. The stretch at 661–701 forms a coiled coil; sequence ESENKEDGLQNKHKRASLTLEEKQKLAKEQEQAQKLKSQQP. S677 carries the post-translational modification Phosphoserine. Residues 684-694 are compositionally biased toward basic and acidic residues; sequence QKLAKEQEQAQ. 2 disordered regions span residues 684–709 and 906–929; these read QKLA…VHTP and NFAQ…DLFG. Residues 695 to 705 show a composition bias toward low complexity; it reads KLKSQQPLKPQ. Positions 699–929 are necessary for interaction with AP2 complex and clathrin, interaction with clathrin is necessary for its targeting to the TGN and endosomal membranes; it reads QQPLKPQVHT…ASNDLKDLFG (231 aa). T708 carries the post-translational modification Phosphothreonine. A compositionally biased stretch (polar residues) spans 912-922; it reads TTMTNSSSASN.

Belongs to the protein kinase superfamily. Interacts with clathrin and AP2B1; the interaction mediates the association with the AP-2 complex. Post-translationally, could autophosphorylate in presence of poly-L-lysine.

The protein localises to the cytoplasmic vesicle. It localises to the clathrin-coated vesicle. It is found in the golgi apparatus. Its subcellular location is the trans-Golgi network membrane. The protein resides in the endosome membrane. Component of the AP2-containing clathrin coat that may regulate clathrin-dependent trafficking at plasma membrane, TGN and endosomal system. A possible serine/threonine-protein kinase toward the beta2-subunit of the plasma membrane adapter complex AP2 and other proteins in presence of poly-L-lysine has not been confirmed. By regulating the expression of excitatory receptors at synapses, plays an essential role in neuronal function and signaling and in brain development. In Homo sapiens (Human), this protein is SCY1-like protein 2.